The chain runs to 262 residues: Taurine import ATP-binding protein TauB (262 aa).

In terms of domain architecture, ABC transporter spans leucine 4 to alanine 233. An ATP-binding site is contributed by glycine 38–threonine 45.

Belongs to the ABC transporter superfamily. Taurine importer (TC 3.A.1.17.1) family. As to quaternary structure, the complex is composed of two ATP-binding proteins (TauB), two transmembrane proteins (TauC) and a solute-binding protein (TauA).

The protein localises to the cell inner membrane. The enzyme catalyses taurine(out) + ATP + H2O = taurine(in) + ADP + phosphate + H(+). Functionally, part of the ABC transporter complex TauABC involved in taurine import. Responsible for energy coupling to the transport system. This Pseudomonas putida (Arthrobacter siderocapsulatus) protein is Taurine import ATP-binding protein TauB.